We begin with the raw amino-acid sequence, 407 residues long: Substance-P receptor (407 aa).

Residues 1-31 (MDNVLPVDSDLSPNISTNTSEPNQFVQPAWQ) are Extracellular-facing. N-linked (GlcNAc...) asparagine glycans are attached at residues Asn-14 and Asn-18. A helical membrane pass occupies residues 32-54 (IVLWAAAYTVIVVTSVVGNVVVM). Residues 55–64 (WIILAHKRMR) are Cytoplasmic-facing. Residues 65–86 (TVTNYFLVNLAFAEASMAAFNT) traverse the membrane as a helical segment. Topologically, residues 87–106 (VVNFTYAVHNEWYYGLFYCK) are extracellular. The cysteines at positions 105 and 180 are disulfide-linked. A helical transmembrane segment spans residues 107–128 (FHNFFPIAAVFASIYSMTAVAF). Residues 129 to 148 (DRYMAIIHPLQPRLSATATK) lie on the Cytoplasmic side of the membrane. The chain crosses the membrane as a helical span at residues 149–169 (VVICVIWVLALLLAFPQGYYS). The Extracellular portion of the chain corresponds to 170–194 (TTETMPSRVVCMIEWPEHPNKIYEK). The helical transmembrane segment at 195-219 (VYHICVTVLIYFLPLLVIGYAYTVV) threads the bilayer. His-197 contributes to the CP-96345 binding site. The Cytoplasmic segment spans residues 220 to 248 (GITLWASEIPGDSSDRYHEQVSAKRKVVK). A helical membrane pass occupies residues 249-270 (MMIVVVCTFAICWLPFHIFFLL). The Extracellular portion of the chain corresponds to 271 to 283 (PYINPDLYLKKFI). The helical transmembrane segment at 284-308 (QQVYLAIMWLAMSSTMYNPIIYCCL) threads the bilayer. The Cytoplasmic portion of the chain corresponds to 309 to 407 (NDRFRLGFKH…SFSFSSNVLS (99 aa)). Cys-322 carries S-palmitoyl cysteine lipidation. The interval 364–407 (AHEEEPEDGPKATPSSLDLTSNCSSRSDSKTMTESFSFSSNVLS) is disordered. Polar residues predominate over residues 376 to 407 (TPSSLDLTSNCSSRSDSKTMTESFSFSSNVLS).

Belongs to the G-protein coupled receptor 1 family. In terms of assembly, interacts with ARRB1.

It is found in the cell membrane. Functionally, this is a receptor for the tachykinin neuropeptide substance P. It is probably associated with G proteins that activate a phosphatidylinositol-calcium second messenger system. The rank order of affinity of this receptor to tachykinins is: substance P &gt; substance K &gt; neuromedin-K. The protein is Substance-P receptor (TACR1) of Homo sapiens (Human).